Reading from the N-terminus, the 328-residue chain is Zinc transporter ZIP13 (328 aa).

The Lumenal portion of the chain corresponds to 1–7 (MPGCPCP). A helical membrane pass occupies residues 8-28 (GCGMAGPRLLFLTALALELLG). The Cytoplasmic segment spans residues 29 to 68 (RAGGSQPALRSRGTATACRLDNKESESWGALLSGERLDTW). A helical transmembrane segment spans residues 69–89 (ICSLLGSLMVGLSGVFPLLVI). Residues 90–108 (PLEMGTMLRSEAGAWHLKQ) lie on the Lumenal side of the membrane. The chain crosses the membrane as a helical span at residues 109-129 (LLSFALGGLLGNVFLHLLPEA). Topologically, residues 130 to 149 (WAYTCSASPGGEGQSLQQQQ) are cytoplasmic. A helical transmembrane segment spans residues 150–170 (QLGLWVIAGILTFLALEKMFL). Residues 171 to 199 (DSKEEGTSQVSGYLNLLANTIDNFTHGLA) are Lumenal-facing. The helical transmembrane segment at 200 to 220 (VAASFLVSKKIGLLTTMAILL) threads the bilayer. An XEXPHE-motif motif is present at residues 221 to 226 (HEIPHE). At 221-242 (HEIPHEVGDFAILLRAGFDRWS) the chain is on the cytoplasmic side. The helical transmembrane segment at 243–263 (AAKLQLSTALGGLLGAGFAIC) threads the bilayer. The Lumenal segment spans residues 264-273 (TQSPKGVEET). Residues 274 to 294 (AAWVLPFTSGGFLYIALVNVL) form a helical membrane-spanning segment. The Cytoplasmic segment spans residues 295 to 306 (PDLLEEEDPWRS). The helical transmembrane segment at 307–327 (LQQLLLLCAGIVVMVLFSLFV) threads the bilayer. Position 328 (Asp328) is a topological domain, lumenal.

Belongs to the ZIP transporter (TC 2.A.5) family. Homodimer.

Its subcellular location is the golgi apparatus membrane. It localises to the cytoplasmic vesicle membrane. The protein localises to the endoplasmic reticulum membrane. It carries out the reaction Zn(2+)(in) = Zn(2+)(out). Its function is as follows. Functions as a zinc transporter transporting Zn(2+) from the Golgi apparatus to the cytosol and thus influences the zinc level at least in areas of the cytosol. May regulate beige adipocyte differentiation. The protein is Zinc transporter ZIP13 of Pongo abelii (Sumatran orangutan).